The sequence spans 163 residues: Beta-lactoglobulin-2 (163 aa).

Intrachain disulfides connect C66–C161 and C106–C120.

Belongs to the calycin superfamily. Lipocalin family. In terms of assembly, monomer.

The protein localises to the secreted. Its function is as follows. Lactoglobulin is the primary component of whey, it binds retinol and is probably involved in the transport of that molecule. The chain is Beta-lactoglobulin-2 (LGB2) from Felis catus (Cat).